Here is a 431-residue protein sequence, read N- to C-terminus: MTNLLWQKPGVAVDAKIQSFLAGDDVILDREFFLHDIAASKAHAQGLQHIGILSPQELDGLSEQLDLLAEDFRGGAFVLDEQYEDCHSAIEARLTERLGDAGRKIHTGRSRNDQILVATRLWLKDKLQRVATLSAEIAKVALDRAQAEAELPVPGYTHIQRAVVSSAGMWWAGWAEAFIDNAVRATDTLQLVDSNPLGTAAGYGVNLPLDRAHTTAELGFARLQVSPIYAQLSRGKYELAALEALGSATLDLRRIAWDVSLFTSGEFAFVALPAQYTTGSSIMPNKRNPDVIELMRATHASVAAARTEIEQLLSLPSGYHRDLQSSKGAIVHGFGRGLAALELLPALLANLEWRPDKLRAAIDSGMYATDVAVEAAVAGVPFREAYKAAAEASDTAGQGRTPEGSLAARVSPGAAADLQLDVLLARWETLR.

This sequence belongs to the lyase 1 family. Argininosuccinate lyase subfamily.

The protein localises to the cytoplasm. The enzyme catalyses 2-(N(omega)-L-arginino)succinate = fumarate + L-arginine. The protein operates within amino-acid biosynthesis; L-arginine biosynthesis; L-arginine from L-ornithine and carbamoyl phosphate: step 3/3. The chain is Argininosuccinate lyase from Xanthomonas oryzae pv. oryzae (strain MAFF 311018).